The sequence spans 252 residues: Uridylate kinase (252 aa).

27–30 (KLGG) contributes to the ATP binding site. Residue Gly-68 participates in UMP binding. Positions 69 and 73 each coordinate ATP. Residues Asp-88 and 149–156 (MGLPYFST) contribute to the UMP site. ATP-binding residues include Tyr-182 and Asp-185.

The protein belongs to the UMP kinase family. Homohexamer.

It is found in the cytoplasm. The enzyme catalyses UMP + ATP = UDP + ADP. It participates in pyrimidine metabolism; CTP biosynthesis via de novo pathway; UDP from UMP (UMPK route): step 1/1. Its activity is regulated as follows. Inhibited by UTP. In terms of biological role, catalyzes the reversible phosphorylation of UMP to UDP. This chain is Uridylate kinase, found in Mycobacterium sp. (strain JLS).